The following is a 275-amino-acid chain: Light-independent protochlorophyllide reductase iron-sulfur ATP-binding protein (275 aa).

ATP contacts are provided by residues 10-15 (GIGKST) and Lys39. Ser14 serves as a coordination point for Mg(2+). The [4Fe-4S] cluster site is built by Cys95 and Cys129. ATP is bound at residue 180–181 (NR).

The protein belongs to the NifH/BchL/ChlL family. In terms of assembly, homodimer. Protochlorophyllide reductase is composed of three subunits; ChlL, ChlN and ChlB. [4Fe-4S] cluster serves as cofactor.

It carries out the reaction chlorophyllide a + oxidized 2[4Fe-4S]-[ferredoxin] + 2 ADP + 2 phosphate = protochlorophyllide a + reduced 2[4Fe-4S]-[ferredoxin] + 2 ATP + 2 H2O. Its pathway is porphyrin-containing compound metabolism; chlorophyll biosynthesis (light-independent). Functionally, component of the dark-operative protochlorophyllide reductase (DPOR) that uses Mg-ATP and reduced ferredoxin to reduce ring D of protochlorophyllide (Pchlide) to form chlorophyllide a (Chlide). This reaction is light-independent. The L component serves as a unique electron donor to the NB-component of the complex, and binds Mg-ATP. The protein is Light-independent protochlorophyllide reductase iron-sulfur ATP-binding protein of Gloeobacter violaceus (strain ATCC 29082 / PCC 7421).